We begin with the raw amino-acid sequence, 370 residues long: 3-dehydroquinate synthase (370 aa).

NAD(+)-binding positions include 108-112, 132-133, Lys145, and Lys154; these read GVIGD and TT. Zn(2+) is bound by residues Glu187, His249, and His267.

Belongs to the sugar phosphate cyclases superfamily. Dehydroquinate synthase family. The cofactor is Co(2+). Zn(2+) serves as cofactor. It depends on NAD(+) as a cofactor.

The protein resides in the cytoplasm. The enzyme catalyses 7-phospho-2-dehydro-3-deoxy-D-arabino-heptonate = 3-dehydroquinate + phosphate. It functions in the pathway metabolic intermediate biosynthesis; chorismate biosynthesis; chorismate from D-erythrose 4-phosphate and phosphoenolpyruvate: step 2/7. Functionally, catalyzes the conversion of 3-deoxy-D-arabino-heptulosonate 7-phosphate (DAHP) to dehydroquinate (DHQ). This chain is 3-dehydroquinate synthase, found in Cereibacter sphaeroides (strain ATCC 17029 / ATH 2.4.9) (Rhodobacter sphaeroides).